Here is a 168-residue protein sequence, read N- to C-terminus: Phosphopantetheine adenylyltransferase (168 aa).

Substrate is bound at residue S8. ATP is bound by residues S8–F9 and H16. Positions 40, 72, and 86 each coordinate substrate. ATP contacts are provided by residues G87 to R89, E97, and Y122 to S128.

It belongs to the bacterial CoaD family. As to quaternary structure, homohexamer. Mg(2+) serves as cofactor.

The protein resides in the cytoplasm. The catalysed reaction is (R)-4'-phosphopantetheine + ATP + H(+) = 3'-dephospho-CoA + diphosphate. The protein operates within cofactor biosynthesis; coenzyme A biosynthesis; CoA from (R)-pantothenate: step 4/5. In terms of biological role, reversibly transfers an adenylyl group from ATP to 4'-phosphopantetheine, yielding dephospho-CoA (dPCoA) and pyrophosphate. The sequence is that of Phosphopantetheine adenylyltransferase from Trichodesmium erythraeum (strain IMS101).